A 268-amino-acid chain; its full sequence is MADRPSWTGYLKVSLVTCPVTMMPATTGSETVRFHTINRRTGHRVVSRYVDAQSGAPVADDEQVLGYPRDDDHYVLLEDEELESVALDSTRTIDIESFVPAGSIGWVWYDAPHFLMPDDTIGVEAFAVIRAAMEAAGMVGIARLVLYRRERAVLLEPRGKGIVLWTLHDGNAVRNGGHPAARTRPASEAESADSPEMKLLTALIDRQTQPWDPEMVRDPVQERLLDIIAARQKGRKRAPAREAAKPKTGNVVSILDALRASLAQDGTS.

The region spanning 13–175 is the Ku domain; sequence VSLVTCPVTM…TLHDGNAVRN (163 aa). The interval 174 to 194 is disordered; sequence RNGGHPAARTRPASEAESADS.

This sequence belongs to the prokaryotic Ku family. As to quaternary structure, homodimer. Interacts with LigD.

In terms of biological role, with LigD forms a non-homologous end joining (NHEJ) DNA repair enzyme, which repairs dsDNA breaks with reduced fidelity. Binds linear dsDNA with 5'- and 3'- overhangs but not closed circular dsDNA nor ssDNA. Recruits and stimulates the ligase activity of LigD. The sequence is that of Non-homologous end joining protein Ku from Gluconacetobacter diazotrophicus (strain ATCC 49037 / DSM 5601 / CCUG 37298 / CIP 103539 / LMG 7603 / PAl5).